The primary structure comprises 145 residues: Regulator of sigma D (145 aa).

Belongs to the Rsd/AlgQ family. Interacts with RpoD.

The protein localises to the cytoplasm. Functionally, binds RpoD and negatively regulates RpoD-mediated transcription activation by preventing the interaction between the primary sigma factor RpoD with the catalytic core of the RNA polymerase and with promoter DNA. May be involved in replacement of the RNA polymerase sigma subunit from RpoD to RpoS during the transition from exponential growth to the stationary phase. The polypeptide is Regulator of sigma D (Sodalis glossinidius (strain morsitans)).